The sequence spans 63 residues: Large ribosomal subunit protein uL29 (63 aa).

Belongs to the universal ribosomal protein uL29 family.

This Shewanella pealeana (strain ATCC 700345 / ANG-SQ1) protein is Large ribosomal subunit protein uL29.